We begin with the raw amino-acid sequence, 429 residues long: Glucose-1-phosphate adenylyltransferase (429 aa).

Alpha-D-glucose 1-phosphate-binding positions include glycine 162, 177–178, and serine 209; that span reads EK.

This sequence belongs to the bacterial/plant glucose-1-phosphate adenylyltransferase family. In terms of assembly, homotetramer.

The enzyme catalyses alpha-D-glucose 1-phosphate + ATP + H(+) = ADP-alpha-D-glucose + diphosphate. Its pathway is glycan biosynthesis; glycogen biosynthesis. Activated by 3-phosphoglycerate and inhibited by phosphate. Its function is as follows. Involved in the biosynthesis of ADP-glucose, a building block required for the elongation reactions to produce glycogen. Catalyzes the reaction between ATP and alpha-D-glucose 1-phosphate (G1P) to produce pyrophosphate and ADP-Glc. The polypeptide is Glucose-1-phosphate adenylyltransferase (Nostoc sp. (strain PCC 7120 / SAG 25.82 / UTEX 2576)).